Consider the following 534-residue polypeptide: Melanopsin-B (534 aa).

The Extracellular portion of the chain corresponds to 1-32 (MDLGKTVEYGTHRQDAIAQIDVPDQVLYTIGS). A helical transmembrane segment spans residues 33 to 53 (FILIIGSVGIIGNMLVLYAFY). Topologically, residues 54–64 (RNKKLRTAPNY) are cytoplasmic. A helical membrane pass occupies residues 65-85 (FIINLAISDFLMSATQAPVCF). The Extracellular segment spans residues 86–102 (LSSLHREWILGDIGCNV). Cysteine 100 and cysteine 178 are joined by a disulfide. Residues 103-123 (YAFCGALFGITSMMTLLAISI) traverse the membrane as a helical segment. Over 124-146 (NRYIVITKPLQSIQWSSKKRTSQ) the chain is Cytoplasmic. Residues 147–167 (IIVLVWMYSLMWSLAPLLGWS) form a helical membrane-spanning segment. Over 168–198 (SYVPEGLRISCTWDYVTSTMSNRSYTMMLCC) the chain is Extracellular. An N-linked (GlcNAc...) asparagine glycan is attached at asparagine 189. Residues 199-219 (CVFFIPLIVISHCYLFMFLAI) traverse the membrane as a helical segment. Topologically, residues 220 to 250 (RSTGRNVQKLGSYGRQSFLSQSMKNEWKMAK) are cytoplasmic. A helical transmembrane segment spans residues 251 to 271 (IAFVIIIVFVLSWSPYACVTL). Over 272–286 (IAWAGHGKSLTPYSK) the chain is Extracellular. A helical membrane pass occupies residues 287-307 (TVPAVIAKASAIYNPIIYGII). Lysine 294 bears the N6-(retinylidene)lysine mark. The Cytoplasmic portion of the chain corresponds to 308–534 (HPKYRETIHK…LYEVVERFLS (227 aa)). A disordered region spans residues 478–501 (SNISETKEEHDNNSEEKSKRTEEE). Residues 482-499 (ETKEEHDNNSEEKSKRTE) show a composition bias toward basic and acidic residues.

The protein belongs to the G-protein coupled receptor 1 family. Opsin subfamily. Highest level in the iris, high level in the inner nuclear layer, possibly in horizontal cells, and lowest level in retinal pigment epithelium. Expressed in melanophore cells of the skin.

It is found in the cell membrane. Its function is as follows. Photoreceptor implicated in non-image-forming responses to light. May be able to isomerize covalently bound all-trans retinal back to 11-cis retinal. The polypeptide is Melanopsin-B (Xenopus laevis (African clawed frog)).